The primary structure comprises 462 residues: Cysteine--tRNA ligase (462 aa).

Cysteine 27 is a binding site for Zn(2+). Residues 29 to 39 (PTVYNYIHVGN) carry the 'HIGH' region motif. Zn(2+) contacts are provided by cysteine 209, histidine 234, and glutamate 238. Residues 266–270 (KMSKS) carry the 'KMSKS' region motif. Lysine 269 lines the ATP pocket.

It belongs to the class-I aminoacyl-tRNA synthetase family. In terms of assembly, monomer. The cofactor is Zn(2+).

It localises to the cytoplasm. The enzyme catalyses tRNA(Cys) + L-cysteine + ATP = L-cysteinyl-tRNA(Cys) + AMP + diphosphate. The sequence is that of Cysteine--tRNA ligase from Finegoldia magna (strain ATCC 29328 / DSM 20472 / WAL 2508) (Peptostreptococcus magnus).